The chain runs to 394 residues: 1-deoxy-D-xylulose 5-phosphate reductoisomerase (394 aa).

NADPH-binding residues include Thr12, Gly13, Ser14, Ile15, Lys39, Gln40, and Asn126. Lys127 lines the 1-deoxy-D-xylulose 5-phosphate pocket. Glu128 contacts NADPH. Asp152 contributes to the Mn(2+) binding site. The 1-deoxy-D-xylulose 5-phosphate site is built by Ser153, Glu154, Ser183, and His206. Residue Glu154 coordinates Mn(2+). Gly212 lines the NADPH pocket. Residues Ser219, Asn224, Lys225, and Glu228 each contribute to the 1-deoxy-D-xylulose 5-phosphate site. Glu228 is a Mn(2+) binding site.

Belongs to the DXR family. Requires Mg(2+) as cofactor. It depends on Mn(2+) as a cofactor.

It carries out the reaction 2-C-methyl-D-erythritol 4-phosphate + NADP(+) = 1-deoxy-D-xylulose 5-phosphate + NADPH + H(+). It functions in the pathway isoprenoid biosynthesis; isopentenyl diphosphate biosynthesis via DXP pathway; isopentenyl diphosphate from 1-deoxy-D-xylulose 5-phosphate: step 1/6. Catalyzes the NADPH-dependent rearrangement and reduction of 1-deoxy-D-xylulose-5-phosphate (DXP) to 2-C-methyl-D-erythritol 4-phosphate (MEP). The protein is 1-deoxy-D-xylulose 5-phosphate reductoisomerase of Neisseria meningitidis serogroup B (strain ATCC BAA-335 / MC58).